A 216-amino-acid polypeptide reads, in one-letter code: DegV domain-containing protein UU190 (216 aa).

The 215-residue stretch at 1-215 (MLWKNLDELF…LNNFAILIEA (215 aa)) folds into the DegV domain. Residue S26 coordinates hexadecanoate.

In terms of biological role, may bind long-chain fatty acids, such as palmitate, and may play a role in lipid transport or fatty acid metabolism. In Ureaplasma parvum serovar 3 (strain ATCC 700970), this protein is DegV domain-containing protein UU190.